Reading from the N-terminus, the 315-residue chain is Small ribosomal subunit protein uS2 (315 aa).

The segment at 241 to 315 (AQHGEERRPG…QPAPGSDANR (75 aa)) is disordered. The segment covering 243–288 (HGEERRPGEEDRDAASERGQKDRRDRRDRRGGGRDRERREPREDRA) has biased composition (basic and acidic residues).

This sequence belongs to the universal ribosomal protein uS2 family.

This Anaeromyxobacter sp. (strain Fw109-5) protein is Small ribosomal subunit protein uS2.